We begin with the raw amino-acid sequence, 554 residues long: Cytochrome c oxidase subunit 1-alpha (554 aa).

The helical transmembrane segment at 26–56 threads the bilayer; it reads KDIGVLYLFTAGLAGLISVTLTVYMRMELQH. The cysteines at positions 63 and 77 are disulfide-linked. 6 helical membrane-spanning segments follow: residues 81-118, 127-148, 175-203, 215-248, 260-295, and 301-319; these read AHLW…LHIG, LNNL…SLLS, AMDL…TFLN, PLFA…DRNF, DPVL…STFA, and GYLP…GFIV. His-91 provides a ligand contact to Fe(II)-heme a. The Cu cation site is built by His-273 and Tyr-277. The 1'-histidyl-3'-tyrosine (His-Tyr) cross-link spans 273-277; it reads HPEVY. His-322 and His-323 together coordinate Cu cation. 5 consecutive transmembrane segments (helical) span residues 331–359, 367–390, 399–425, 436–463, and 478–508; these read LTQQ…IATM, KTPM…VIAQ, DTYY…GTYY, PEWA…FLGR, and SYWN…TLFA. His-406 contacts heme a3. Residue His-408 participates in Fe(II)-heme a binding.

Belongs to the heme-copper respiratory oxidase family. Cu(2+) serves as cofactor. Heme is required as a cofactor.

The protein localises to the cell inner membrane. The enzyme catalyses 4 Fe(II)-[cytochrome c] + O2 + 8 H(+)(in) = 4 Fe(III)-[cytochrome c] + 2 H2O + 4 H(+)(out). The protein operates within energy metabolism; oxidative phosphorylation. Its function is as follows. Subunit I and II form the functional core of the enzyme complex. Electrons originating in cytochrome c are transferred via heme a and Cu(A) to the binuclear center formed by heme a3 and Cu(B). This cytochrome c oxidase shows proton pump activity across the membrane in addition to the electron transfer. In Paracoccus denitrificans, this protein is Cytochrome c oxidase subunit 1-alpha (ctaDI).